A 281-amino-acid polypeptide reads, in one-letter code: Pantothenate synthetase (281 aa).

Position 30-37 (30-37 (MGNLHQGH)) interacts with ATP. His-37 (proton donor) is an active-site residue. Gln-61 contributes to the (R)-pantoate binding site. Residue Gln-61 coordinates beta-alanine. Position 149–152 (149–152 (GNKD)) interacts with ATP. Gln-155 contacts (R)-pantoate. ATP contacts are provided by residues Ile-178 and 186–189 (MSSR).

The protein belongs to the pantothenate synthetase family. In terms of assembly, homodimer.

It is found in the cytoplasm. The enzyme catalyses (R)-pantoate + beta-alanine + ATP = (R)-pantothenate + AMP + diphosphate + H(+). It participates in cofactor biosynthesis; (R)-pantothenate biosynthesis; (R)-pantothenate from (R)-pantoate and beta-alanine: step 1/1. Functionally, catalyzes the condensation of pantoate with beta-alanine in an ATP-dependent reaction via a pantoyl-adenylate intermediate. This chain is Pantothenate synthetase, found in Shewanella baltica (strain OS195).